Reading from the N-terminus, the 187-residue chain is Orotate phosphoribosyltransferase (187 aa).

110–118 (EDVVTTGGS) serves as a coordination point for 5-phospho-alpha-D-ribose 1-diphosphate. Thr-114 and Arg-142 together coordinate orotate.

It belongs to the purine/pyrimidine phosphoribosyltransferase family. PyrE subfamily. Homodimer. The cofactor is Mg(2+).

It catalyses the reaction orotidine 5'-phosphate + diphosphate = orotate + 5-phospho-alpha-D-ribose 1-diphosphate. It participates in pyrimidine metabolism; UMP biosynthesis via de novo pathway; UMP from orotate: step 1/2. Functionally, catalyzes the transfer of a ribosyl phosphate group from 5-phosphoribose 1-diphosphate to orotate, leading to the formation of orotidine monophosphate (OMP). This is Orotate phosphoribosyltransferase from Thermotoga maritima (strain ATCC 43589 / DSM 3109 / JCM 10099 / NBRC 100826 / MSB8).